The chain runs to 350 residues: tRNA uridine(34) hydroxylase (350 aa).

Positions 146-240 constitute a Rhodanese domain; that stretch reads DDPDALFIDM…YARKAREQGL (95 aa). C200 serves as the catalytic Cysteine persulfide intermediate.

The protein belongs to the TrhO family.

It carries out the reaction uridine(34) in tRNA + AH2 + O2 = 5-hydroxyuridine(34) in tRNA + A + H2O. Functionally, catalyzes oxygen-dependent 5-hydroxyuridine (ho5U) modification at position 34 in tRNAs, the first step in 5-carboxymethoxyuridine (cmo5U) biosynthesis. May be part of an alternate pathway, which is able to bypass cmo5U biogenesis in a subset of tRNAs under aerobic conditions. The polypeptide is tRNA uridine(34) hydroxylase (Escherichia coli O157:H7).